A 419-amino-acid polypeptide reads, in one-letter code: Pyrophosphate--fructose 6-phosphate 1-phosphotransferase (419 aa).

Gly12 is a binding site for diphosphate. Asp107 contacts Mg(2+). Substrate-binding positions include 132–134 (TID), 178–180 (MGR), Glu238, and 300–303 (YELR). Asp134 (proton acceptor) is an active-site residue.

Belongs to the phosphofructokinase type A (PFKA) family. PPi-dependent PFK group II subfamily. Clade 'Short' sub-subfamily. As to quaternary structure, homodimer. It depends on Mg(2+) as a cofactor. Co(2+) is required as a cofactor. Requires Mn(2+) as cofactor. The cofactor is Ni(2+).

It is found in the cytoplasm. The enzyme catalyses beta-D-fructose 6-phosphate + diphosphate = beta-D-fructose 1,6-bisphosphate + phosphate + H(+). The protein operates within carbohydrate degradation; glycolysis; D-glyceraldehyde 3-phosphate and glycerone phosphate from D-glucose: step 3/4. With respect to regulation, non-allosteric. Functionally, catalyzes the phosphorylation of D-fructose 6-phosphate, the first committing step of glycolysis. Uses inorganic phosphate (PPi) as phosphoryl donor instead of ATP like common ATP-dependent phosphofructokinases (ATP-PFKs), which renders the reaction reversible, and can thus function both in glycolysis and gluconeogenesis. Consistently, PPi-PFK can replace the enzymes of both the forward (ATP-PFK) and reverse (fructose-bisphosphatase (FBPase)) reactions. This is Pyrophosphate--fructose 6-phosphate 1-phosphotransferase from Thermotoga maritima (strain ATCC 43589 / DSM 3109 / JCM 10099 / NBRC 100826 / MSB8).